We begin with the raw amino-acid sequence, 239 residues long: tRNA (guanine-N(1)-)-methyltransferase (239 aa).

S-adenosyl-L-methionine contacts are provided by residues Gly-113 and Leu-137–Leu-142.

This sequence belongs to the RNA methyltransferase TrmD family. As to quaternary structure, homodimer.

The protein resides in the cytoplasm. It carries out the reaction guanosine(37) in tRNA + S-adenosyl-L-methionine = N(1)-methylguanosine(37) in tRNA + S-adenosyl-L-homocysteine + H(+). Its function is as follows. Specifically methylates guanosine-37 in various tRNAs. This is tRNA (guanine-N(1)-)-methyltransferase from Cutibacterium acnes (strain DSM 16379 / KPA171202) (Propionibacterium acnes).